The following is a 370-amino-acid chain: Glutamate 5-kinase (370 aa).

K13 provides a ligand contact to ATP. Substrate is bound by residues S54, D140, and N152. Residues S172 to D173 and S214 to K220 each bind ATP. The PUA domain maps to T278–R355.

It belongs to the glutamate 5-kinase family.

Its subcellular location is the cytoplasm. It carries out the reaction L-glutamate + ATP = L-glutamyl 5-phosphate + ADP. It participates in amino-acid biosynthesis; L-proline biosynthesis; L-glutamate 5-semialdehyde from L-glutamate: step 1/2. Its function is as follows. Catalyzes the transfer of a phosphate group to glutamate to form L-glutamate 5-phosphate. This Paramagnetospirillum magneticum (strain ATCC 700264 / AMB-1) (Magnetospirillum magneticum) protein is Glutamate 5-kinase.